Reading from the N-terminus, the 683-residue chain is Probable potassium transport system protein Kup 1 (683 aa).

The next 12 helical transmembrane spans lie at 13–33, 55–75, 98–118, 139–159, 168–188, 218–238, 251–271, 296–316, 345–365, 376–396, 401–421, and 426–446; these read GLLIAIGIVYGDIGTSPLYVM, ISLVLWTVTLLTTLQTVFIAL, WLVLPALIGGAAILADGTLTP, VPVSTQGTVIAITVVILLLLF, IIGKAFGPIMFIWFTFLGVIG, AGIFILGSIFLATTGAEALYS, SWPYVFVCLSLNYFGQGVWIL, LAAIVLATIAAVIASQALITG, IYIPSVNKMICAATIAIVLFF, GLSITISMLMTTILLYEWLAM, TIWNWLFLIFFGFLDVMFMLA, and FMHGGYVSLVIAGFIGIIMYV.

Belongs to the HAK/KUP transporter (TC 2.A.72) family.

Its subcellular location is the cell membrane. The catalysed reaction is K(+)(in) + H(+)(in) = K(+)(out) + H(+)(out). In terms of biological role, transport of potassium into the cell. Likely operates as a K(+):H(+) symporter. The protein is Probable potassium transport system protein Kup 1 of Lactobacillus johnsonii (strain CNCM I-12250 / La1 / NCC 533).